A 321-amino-acid polypeptide reads, in one-letter code: NADPH-dependent codeinone reductase 1-3 (321 aa).

NADPH is bound by residues threonine 27 and aspartate 51. Active-site proton donor residues include tyrosine 56 and histidine 119. Histidine 119 provides a ligand contact to substrate. Residues glutamine 187, serine 214, leucine 216, serine 264, and arginine 269 each contribute to the NADPH site. Residues 300-321 are disordered; the sequence is ADFLLSPTGPFKTEEEFWDEKD.

The protein belongs to the aldo/keto reductase family. In terms of tissue distribution, latex secreting cells (laticifer cells). Expressed constitutively in all organs with highest levels in capsules. Restricted to the parietal region of sieve elements adjacent or proximal to laticifers in roots, stems, leaves and carpels.

It is found in the cytoplasm. The protein localises to the cytosol. The enzyme catalyses codeine + NADP(+) = codeinone + NADPH + H(+). It carries out the reaction neopine + NADP(+) = neopinone + NADPH + H(+). It catalyses the reaction morphine + NADP(+) = morphinone + NADPH + H(+). The catalysed reaction is neomorphine + NADP(+) = neomorphinone + NADPH + H(+). Its pathway is alkaloid biosynthesis; morphine biosynthesis. Its function is as follows. NADPH-dependent codeinone reductase involved in biosynthesis of morphinan-type benzylisoquinoline and opiate alkaloids natural products. Reduces codeinone to codeine in the penultimate step in morphine biosynthesis. Can use morphinone, hydrocodone and hydromorphone as substrate during reductive reaction with NADPH as cofactor, and morphine and dihydrocodeine as substrate during oxidative reaction with NADP as cofactor. Converts morphinone to morphine, and neomorphinone to neomorphine. Reduces irreversibly neopinone, a spontaneous isomer of codeinone, to neopine; in planta, neopine levels are limited to low levels. This chain is NADPH-dependent codeinone reductase 1-3, found in Papaver somniferum (Opium poppy).